We begin with the raw amino-acid sequence, 208 residues long: Ribosomal RNA large subunit methyltransferase E (208 aa).

The S-adenosyl-L-methionine site is built by Gly63, Trp65, Asp83, Asp99, and Asp124. Lys164 serves as the catalytic Proton acceptor.

Belongs to the class I-like SAM-binding methyltransferase superfamily. RNA methyltransferase RlmE family.

The protein resides in the cytoplasm. It catalyses the reaction uridine(2552) in 23S rRNA + S-adenosyl-L-methionine = 2'-O-methyluridine(2552) in 23S rRNA + S-adenosyl-L-homocysteine + H(+). Functionally, specifically methylates the uridine in position 2552 of 23S rRNA at the 2'-O position of the ribose in the fully assembled 50S ribosomal subunit. In Salmonella choleraesuis (strain SC-B67), this protein is Ribosomal RNA large subunit methyltransferase E.